The following is a 214-amino-acid chain: Octanoyltransferase (214 aa).

The BPL/LPL catalytic domain maps to 34–214 (GVQKELVWLL…KFNEIFSNFN (181 aa)). Residues 73–80 (RGGKYTYH), 145–147 (AFG), and 158–160 (GVS) contribute to the substrate site. The active-site Acyl-thioester intermediate is C176.

This sequence belongs to the LipB family.

The protein resides in the cytoplasm. The enzyme catalyses octanoyl-[ACP] + L-lysyl-[protein] = N(6)-octanoyl-L-lysyl-[protein] + holo-[ACP] + H(+). The protein operates within protein modification; protein lipoylation via endogenous pathway; protein N(6)-(lipoyl)lysine from octanoyl-[acyl-carrier-protein]: step 1/2. In terms of biological role, catalyzes the transfer of endogenously produced octanoic acid from octanoyl-acyl-carrier-protein onto the lipoyl domains of lipoate-dependent enzymes. Lipoyl-ACP can also act as a substrate although octanoyl-ACP is likely to be the physiological substrate. The sequence is that of Octanoyltransferase from Ehrlichia chaffeensis (strain ATCC CRL-10679 / Arkansas).